The sequence spans 346 residues: Tyrosine--tRNA ligase (346 aa).

Y35 contributes to the L-tyrosine binding site. Residues 40–48 (PTGEMHIGH) carry the 'HIGH' region motif. Positions 162, 166, 169, and 184 each coordinate L-tyrosine.

The protein belongs to the class-I aminoacyl-tRNA synthetase family. TyrS type 3 subfamily. Homodimer.

The protein resides in the cytoplasm. The catalysed reaction is tRNA(Tyr) + L-tyrosine + ATP = L-tyrosyl-tRNA(Tyr) + AMP + diphosphate + H(+). In terms of biological role, catalyzes the attachment of tyrosine to tRNA(Tyr) in a two-step reaction: tyrosine is first activated by ATP to form Tyr-AMP and then transferred to the acceptor end of tRNA(Tyr). The chain is Tyrosine--tRNA ligase from Haloarcula marismortui (strain ATCC 43049 / DSM 3752 / JCM 8966 / VKM B-1809) (Halobacterium marismortui).